Consider the following 185-residue polypeptide: Translation initiation factor IF-3 (185 aa).

Belongs to the IF-3 family. In terms of assembly, monomer.

It localises to the cytoplasm. Its function is as follows. IF-3 binds to the 30S ribosomal subunit and shifts the equilibrium between 70S ribosomes and their 50S and 30S subunits in favor of the free subunits, thus enhancing the availability of 30S subunits on which protein synthesis initiation begins. This is Translation initiation factor IF-3 from Rickettsia prowazekii (strain Madrid E).